The following is a 123-amino-acid chain: Prostate stem cell antigen (123 aa).

The signal sequence occupies residues 1–20 (MKTVFFLLLATYLALHPGAA). A UPAR/Ly6 domain is found at 21–95 (LQCYSCTAQM…CCYSDLCNVN (75 aa)). Cystine bridges form between cysteine 23–cysteine 48, cysteine 26–cysteine 35, cysteine 41–cysteine 66, cysteine 70–cysteine 86, and cysteine 87–cysteine 92. N-linked (GlcNAc...) asparagine glycosylation occurs at asparagine 40. A lipid anchor (GPI-anchor amidated asparagine) is attached at asparagine 95. Positions 96–123 (GAHTLKPPTTLGLLTVLCSLLLWGSSRL) are cleaved as a propeptide — removed in mature form.

In terms of assembly, interacts with CHRNA4. As to expression, predominantly expressed in prostate. Also found in spleen, liver, lung, prostate, kidney and testis. Expressed in brain cortex; expression is increased in transgenic mouse model of Alzheimer disease (at protein level).

The protein resides in the cell membrane. Its function is as follows. May be involved in the regulation of cell proliferation. In terms of biological role, may act as a modulator of nicotinic acetylcholine receptors (nAChRs) activity. In vitro inhibits nicotine-induced signaling probably implicating alpha-3:beta-2- or alpha-7-containing nAChRs. This chain is Prostate stem cell antigen (Psca), found in Mus musculus (Mouse).